The chain runs to 633 residues: Proline-rich protein LAS17 (633 aa).

One can recognise a WH1 domain in the interval 16–127; it reads LPKASNKIID…KRVQKRERYA (112 aa). Disordered stretches follow at residues 145–545 and 563–606; these read REEQ…TTGD and ALRK…PASL. The segment covering 192–215 has biased composition (low complexity); the sequence is AETFDSDQTSSFSDINSTTASAPT. Pro residues-rich tracts occupy residues 216–225 and 238–256; these read TPAPALPPAS and SLPPLPNQFAPLPDPPQHN. Composition is skewed to low complexity over residues 257-269 and 307-322; these read SPPQNNAPSQPQS and PQQNRPLPQLPNRNNR. Thr334 carries the post-translational modification Phosphothreonine. Residue Ser337 is modified to Phosphoserine. Pro residues predominate over residues 342–357; the sequence is PAPPPPPRRGPAPPPP. 3 stretches are compositionally biased toward polar residues: residues 363-376, 399-414, and 454-465; these read TSNTLNSAGGNSLL, NVTMQQNPQQYNNSNR, and PQNTQAPSQATN. Positions 479 to 488 are enriched in low complexity; that stretch reads QSQIPQSAPS. A WH2 domain is found at 547–567; the sequence is GRDALLASIRGAGGIGALRKV. Residue Ser588 is modified to Phosphoserine.

As to quaternary structure, interacts with KRE6, LSB3, LSB5 and YSC84.

The protein is Proline-rich protein LAS17 (LAS17) of Saccharomyces cerevisiae (strain ATCC 204508 / S288c) (Baker's yeast).